Here is a 203-residue protein sequence, read N- to C-terminus: LexA repressor (203 aa).

The segment at residues 32–52 is a DNA-binding region (H-T-H motif); it reads RAEICTAFGFRSPNAAETHLR. Active-site for autocatalytic cleavage activity residues include serine 121 and lysine 158.

The protein belongs to the peptidase S24 family. Homodimer.

It catalyses the reaction Hydrolysis of Ala-|-Gly bond in repressor LexA.. In terms of biological role, represses a number of genes involved in the response to DNA damage (SOS response), including recA and lexA. In the presence of single-stranded DNA, RecA interacts with LexA causing an autocatalytic cleavage which disrupts the DNA-binding part of LexA, leading to derepression of the SOS regulon and eventually DNA repair. This chain is LexA repressor, found in Aromatoleum aromaticum (strain DSM 19018 / LMG 30748 / EbN1) (Azoarcus sp. (strain EbN1)).